The chain runs to 195 residues: 7-methyl-GTP pyrophosphatase (195 aa).

The Proton acceptor role is filled by Asp-70.

The protein belongs to the Maf family. YceF subfamily. Requires a divalent metal cation as cofactor.

Its subcellular location is the cytoplasm. It carries out the reaction N(7)-methyl-GTP + H2O = N(7)-methyl-GMP + diphosphate + H(+). Its function is as follows. Nucleoside triphosphate pyrophosphatase that hydrolyzes 7-methyl-GTP (m(7)GTP). May have a dual role in cell division arrest and in preventing the incorporation of modified nucleotides into cellular nucleic acids. In Shewanella sp. (strain MR-7), this protein is 7-methyl-GTP pyrophosphatase.